Reading from the N-terminus, the 288-residue chain is Pteridine reductase 1 (288 aa).

Residue 17–40 participates in NADP(+) binding; the sequence is RLGRSIAEGLHAEGYAVCLHYHRS. Position 175 (Ser175) interacts with substrate. Tyr194 acts as the Proton acceptor in catalysis.

Belongs to the short-chain dehydrogenases/reductases (SDR) family. In terms of assembly, homotetramer.

The enzyme catalyses (6R)-L-erythro-5,6,7,8-tetrahydrobiopterin + 2 NADP(+) = L-erythro-biopterin + 2 NADPH + 2 H(+). It participates in cofactor biosynthesis; tetrahydrobiopterin biosynthesis; tetrahydrobiopterin from biopterin: step 1/1. Exhibits a NADPH-dependent biopterin reductase activity. Has good activity with folate and significant activity with dihydrofolate and dihydrobiopterin, but not with quinonoid dihydrobiopterin. Confers resistance to methotrexate (MTX). The polypeptide is Pteridine reductase 1 (PTR1) (Leishmania major).